The sequence spans 338 residues: MGNALRFLYGHCCKPTVEDHYQPPHGYGVSTATVGVSALAHDLFHFENTSQIPEGLTKYVVSSKKAQTNWYKKLSQAWREAKPPPQTAEQATRLIILTLKRHQKADVKGLLRFYGLPLSNNPSTEATTVVAPPQADQGVKFELHTLPVDVKAVADGDTVTVYVNTEDPREASNLPKSVKVAAQERAKARAVRDYVKADALQKNIVDAGYRVLSGPNNEDILARKYRIRLRGIDSPESSMPFGKEAKEELIKLVVGKCLTVHIYEEDRYGRSVGDIYCNGQFIQEKMLKKGLAWHYTAYDKRPQLSKWEEKARAARVGLWASSNPEKPWEWRKNKRNGK.

The region spanning 144–321 (HTLPVDVKAV…RAARVGLWAS (178 aa)) is the TNase-like domain. Residues R228, E236, and R270 contribute to the active site.

This is an uncharacterized protein from Capnoides sempervirens (Rock-harlequin).